Here is a 62-residue protein sequence, read N- to C-terminus: LKLQKRLAASYLKCGKGKVWLDPNEVSEISMANSRQNIRKLVKDGFIIKKPHKIHSRSRCKK.

Belongs to the eukaryotic ribosomal protein eL19 family.

In Zea mays (Maize), this protein is Large ribosomal subunit protein eL19 (RPL19).